Consider the following 366-residue polypeptide: 3-isopropylmalate dehydrogenase (366 aa).

76 to 89 is an NAD(+) binding site; the sequence is GPKWDANPSHLRPE. 4 residues coordinate substrate: Arg96, Arg106, Arg134, and Asp219. 3 residues coordinate Mg(2+): Asp219, Asp243, and Asp247. 277-289 provides a ligand contact to NAD(+); it reads GSAPDIAGKGIAN.

Belongs to the isocitrate and isopropylmalate dehydrogenases family. LeuB type 1 subfamily. As to quaternary structure, homodimer. Requires Mg(2+) as cofactor. It depends on Mn(2+) as a cofactor.

It is found in the cytoplasm. The catalysed reaction is (2R,3S)-3-isopropylmalate + NAD(+) = 4-methyl-2-oxopentanoate + CO2 + NADH. It participates in amino-acid biosynthesis; L-leucine biosynthesis; L-leucine from 3-methyl-2-oxobutanoate: step 3/4. Its function is as follows. Catalyzes the oxidation of 3-carboxy-2-hydroxy-4-methylpentanoate (3-isopropylmalate) to 3-carboxy-4-methyl-2-oxopentanoate. The product decarboxylates to 4-methyl-2 oxopentanoate. This Oceanobacillus iheyensis (strain DSM 14371 / CIP 107618 / JCM 11309 / KCTC 3954 / HTE831) protein is 3-isopropylmalate dehydrogenase.